The sequence spans 127 residues: Holo-[acyl-carrier-protein] synthase (127 aa).

Mg(2+) contacts are provided by Asp-8 and Glu-59.

This sequence belongs to the P-Pant transferase superfamily. AcpS family. Mg(2+) is required as a cofactor.

Its subcellular location is the cytoplasm. The enzyme catalyses apo-[ACP] + CoA = holo-[ACP] + adenosine 3',5'-bisphosphate + H(+). In terms of biological role, transfers the 4'-phosphopantetheine moiety from coenzyme A to a Ser of acyl-carrier-protein. This Rickettsia bellii (strain OSU 85-389) protein is Holo-[acyl-carrier-protein] synthase.